Consider the following 1089-residue polypeptide: Probable transport protein MmpL8 (1089 aa).

The interval 1–26 (MCDVLMQPVRTPRPSTNLRSKPLRPT) is disordered. The next 12 helical transmembrane spans lie at 44 to 64 (WVVI…VPSL), 222 to 242 (ITIL…TMVL), 257 to 277 (LVAI…IFMS), 316 to 336 (IGKV…GMVF), 349 to 369 (LGIS…ALMV), 400 to 420 (KTHL…AGLA), 555 to 575 (AIST…LLGG), 874 to 894 (IIAM…RAIV), 898 to 918 (YLIG…VIVF), 930 to 950 (IPGL…MLLI), 973 to 993 (GGVI…LVFA), and 996 to 1016 (GSVV…TFLV). Residues 1056–1078 (RTKRKPLLPKEEEEQSPPDDDDL) are disordered. The span at 1066 to 1078 (EEEEQSPPDDDDL) shows a compositional bias: acidic residues.

The protein belongs to the resistance-nodulation-cell division (RND) (TC 2.A.6) family. MmpL subfamily.

The protein resides in the cell membrane. This is Probable transport protein MmpL8 (mmpL8) from Mycobacterium bovis (strain ATCC BAA-935 / AF2122/97).